Here is a 261-residue protein sequence, read N- to C-terminus: 5'-nucleotidase SurE (261 aa).

Positions 18, 19, 50, and 102 each coordinate a divalent metal cation.

It belongs to the SurE nucleotidase family. A divalent metal cation is required as a cofactor.

It localises to the cytoplasm. It catalyses the reaction a ribonucleoside 5'-phosphate + H2O = a ribonucleoside + phosphate. Functionally, nucleotidase that shows phosphatase activity on nucleoside 5'-monophosphates. The protein is 5'-nucleotidase SurE of Rhodospirillum rubrum (strain ATCC 11170 / ATH 1.1.1 / DSM 467 / LMG 4362 / NCIMB 8255 / S1).